The chain runs to 155 residues: MSRRGTAEKKTAKSDPIYRNRLVNMLVNRILKHGKKSLAYQIIYRAVKKIQQKTETNPLSVLRQAIRGVTPDIAVKSRRVGGSTHQVPIEIGSTQGKALAIRWLLAASRKRPGRNMAFKLSSELVDAAKGSGDAIRKKEETHKMAEANRAFAHFR.

It belongs to the universal ribosomal protein uS7 family. Part of the 30S ribosomal subunit.

It is found in the plastid. The protein resides in the chloroplast. One of the primary rRNA binding proteins, it binds directly to 16S rRNA where it nucleates assembly of the head domain of the 30S subunit. This Lemna minor (Common duckweed) protein is Small ribosomal subunit protein uS7cz/uS7cy (rps7-A).